Here is a 462-residue protein sequence, read N- to C-terminus: MTSKSSSWKALLKNWEFKVAAFIGIYFLISHVVLETTDVVNEKGLKSHLKVLPEEVIDYYGKQPFSNVDKYAYMQYATNYDYLNLAIINFIHLRKANTKIPNLVIIYDEVLHYYASDKWSELYQVANQYKITLKAAPLIKASYQDDSNWAASFTKFHIFNQVEYDRIVFFDSDSMLVDIPNEIDFDNMESRFNHIDELFKIPQELSFASPQAYWLNNVVEGKSPRPRKNVEIPNKKRYSLRMKKLVNDLSIYQDFNLLPSLIYENHYFDNANHFFANHIMVITPSKNTFQELMRYIHNPWWWSITNRGSLRKPNDYDMEILNKYLNNELQRKRINVGILPHRVYGVLTGEFGEEWHERFVVEPQYLPFINKKSNKGWSPLEFFKKIKVVHFSDSPIPKPWEEENNEEHYNIKKIYCDKGDMEKFHKDYPVYKPRLTDDCDSVSIWNWFREQFYKERSGYWFA.

Residues 1 to 18 (MTSKSSSWKALLKNWEFK) lie on the Cytoplasmic side of the membrane. The chain crosses the membrane as a helical; Signal-anchor for type II membrane protein span at residues 19–35 (VAAFIGIYFLISHVVLE). Residues 36 to 462 (TTDVVNEKGL…YKERSGYWFA (427 aa)) lie on the Lumenal side of the membrane. The DXD signature appears at 171-173 (DSD).

Belongs to the GNT1 family.

It localises to the golgi apparatus membrane. The protein resides in the vacuole membrane. In terms of biological role, N-acetylglucosaminyltransferase involved in the Golgi-specific modification of N-linked glycans. This is Glucose N-acetyltransferase 1 (GNT1) from Candida albicans (strain SC5314 / ATCC MYA-2876) (Yeast).